The primary structure comprises 357 residues: UDP-N-acetylglucosamine--N-acetylmuramyl-(pentapeptide) pyrophosphoryl-undecaprenol N-acetylglucosamine transferase (357 aa).

Residues 13–15, Asn-125, Arg-161, Ser-189, Ile-243, and Gln-288 contribute to the UDP-N-acetyl-alpha-D-glucosamine site; that span reads TGG.

It belongs to the glycosyltransferase 28 family. MurG subfamily.

The protein localises to the cell inner membrane. It catalyses the reaction di-trans,octa-cis-undecaprenyl diphospho-N-acetyl-alpha-D-muramoyl-L-alanyl-D-glutamyl-meso-2,6-diaminopimeloyl-D-alanyl-D-alanine + UDP-N-acetyl-alpha-D-glucosamine = di-trans,octa-cis-undecaprenyl diphospho-[N-acetyl-alpha-D-glucosaminyl-(1-&gt;4)]-N-acetyl-alpha-D-muramoyl-L-alanyl-D-glutamyl-meso-2,6-diaminopimeloyl-D-alanyl-D-alanine + UDP + H(+). The protein operates within cell wall biogenesis; peptidoglycan biosynthesis. Its function is as follows. Cell wall formation. Catalyzes the transfer of a GlcNAc subunit on undecaprenyl-pyrophosphoryl-MurNAc-pentapeptide (lipid intermediate I) to form undecaprenyl-pyrophosphoryl-MurNAc-(pentapeptide)GlcNAc (lipid intermediate II). The protein is UDP-N-acetylglucosamine--N-acetylmuramyl-(pentapeptide) pyrophosphoryl-undecaprenol N-acetylglucosamine transferase of Polynucleobacter asymbioticus (strain DSM 18221 / CIP 109841 / QLW-P1DMWA-1) (Polynucleobacter necessarius subsp. asymbioticus).